Reading from the N-terminus, the 749-residue chain is Phosphate-regulating neutral endopeptidase PHEX (749 aa).

Topologically, residues 1 to 20 (MEAETGSSVETGKKANRGTR) are cytoplasmic. A helical; Signal-anchor for type II membrane protein membrane pass occupies residues 21–41 (IALVVFVGGTLVLGTILFLVS). At 42-641 (QGLLSLQAKQ…LNVKGKRTLG (600 aa)) the chain is on the extracellular side. Residues 53 to 749 (YCLKPECIEA…NRGMDSCRLW (697 aa)) enclose the Peptidase M13 domain. A disulfide bond links cysteine 54 and cysteine 59. N-linked (GlcNAc...) asparagine glycans are attached at residues asparagine 71, asparagine 238, asparagine 263, asparagine 290, asparagine 301, asparagine 377, and asparagine 484. Cystine bridges form between cysteine 77-cysteine 733, cysteine 85-cysteine 693, cysteine 142-cysteine 406, and cysteine 617-cysteine 746. Histidine 580 contributes to the Zn(2+) binding site. Residue glutamate 581 is part of the active site. Residues histidine 584 and glutamate 642 each contribute to the Zn(2+) site. The Proton donor role is filled by aspartate 646. Asparagine 736 carries an N-linked (GlcNAc...) asparagine glycan.

It belongs to the peptidase M13 family. Interacts with MEPE; the interaction is zinc-dependent (via ASARM motif). It depends on Zn(2+) as a cofactor. Specifically expressed in ovary. Expressed at low levels in kidney.

It is found in the cell membrane. Functionally, peptidase that cleaves SIBLING (small integrin-binding ligand, N-linked glycoprotein)-derived ASARM peptides, thus regulating their biological activity. Cleaves ASARM peptides between Ser and Glu or Asp residues. Regulates osteogenic cell differentiation and bone mineralization through the cleavage of the MEPE-derived ASARM peptide. Promotes dentin mineralization and renal phosphate reabsorption by cleaving DMP1- and MEPE-derived ASARM peptides. Inhibits the cleavage of MEPE by CTSB/cathepsin B thus preventing MEPE degradation. The sequence is that of Phosphate-regulating neutral endopeptidase PHEX (PHEX) from Homo sapiens (Human).